The primary structure comprises 419 residues: L-cysteine:1D-myo-inositol 2-amino-2-deoxy-alpha-D-glucopyranoside ligase (419 aa).

Residues 1 to 20 (MRSWSVPEVPALPGRGPRVH) form a disordered region. Residue C44 participates in Zn(2+) binding. Residues 44–47 (CGIT), T59, and 82–84 (NVT) contribute to the L-cysteinyl-5'-AMP site. The 'HIGH' region signature appears at 46-56 (ITPYDATHLGH). Positions 191 to 196 (ERGGDP) match the 'ERGGDP' region motif. Residue W232 coordinates L-cysteinyl-5'-AMP. Residue C236 coordinates Zn(2+). An L-cysteinyl-5'-AMP-binding site is contributed by 254-256 (GSD). H261 serves as a coordination point for Zn(2+). V289 is an L-cysteinyl-5'-AMP binding site. The 'KMSKS' region signature appears at 295–299 (KMSKS).

It belongs to the class-I aminoacyl-tRNA synthetase family. MshC subfamily. In terms of assembly, monomer. Zn(2+) is required as a cofactor.

The enzyme catalyses 1D-myo-inositol 2-amino-2-deoxy-alpha-D-glucopyranoside + L-cysteine + ATP = 1D-myo-inositol 2-(L-cysteinylamino)-2-deoxy-alpha-D-glucopyranoside + AMP + diphosphate + H(+). In terms of biological role, catalyzes the ATP-dependent condensation of GlcN-Ins and L-cysteine to form L-Cys-GlcN-Ins. In Kineococcus radiotolerans (strain ATCC BAA-149 / DSM 14245 / SRS30216), this protein is L-cysteine:1D-myo-inositol 2-amino-2-deoxy-alpha-D-glucopyranoside ligase.